The primary structure comprises 777 residues: Endonuclease MutS2 (777 aa).

An ATP-binding site is contributed by 328-335; the sequence is GPNTGGKT. In terms of domain architecture, Smr spans 702-777; that stretch reads LDLRGKRYEE…GSGATIVIFK (76 aa).

This sequence belongs to the DNA mismatch repair MutS family. MutS2 subfamily. In terms of assembly, homodimer. Binds to stalled ribosomes, contacting rRNA.

Functionally, endonuclease that is involved in the suppression of homologous recombination and thus may have a key role in the control of bacterial genetic diversity. Its function is as follows. Acts as a ribosome collision sensor, splitting the ribosome into its 2 subunits. Detects stalled/collided 70S ribosomes which it binds and splits by an ATP-hydrolysis driven conformational change. Acts upstream of the ribosome quality control system (RQC), a ribosome-associated complex that mediates the extraction of incompletely synthesized nascent chains from stalled ribosomes and their subsequent degradation. Probably generates substrates for RQC. The polypeptide is Endonuclease MutS2 (Streptococcus gordonii (strain Challis / ATCC 35105 / BCRC 15272 / CH1 / DL1 / V288)).